The sequence spans 337 residues: 2-oxoglutarate receptor 1 (337 aa).

The Extracellular portion of the chain corresponds to 1 to 37 (MIETLDSPANDSDFLDYITALENCTDEQISFKMQYLP). An N-linked (GlcNAc...) asparagine glycan is attached at Asn-23. Residues 38 to 58 (VIYSIIFLVGFPGNTVAISIY) form a helical membrane-spanning segment. Residues 59 to 69 (VFKMRPWKSST) lie on the Cytoplasmic side of the membrane. The chain crosses the membrane as a helical span at residues 70–90 (IIMLNLALTDLLYLTSLPFLI). Topologically, residues 91-116 (HYYASGENWIFGDFMCKFIRFGFHFN) are extracellular. Cys-106 and Cys-183 are disulfide-bonded. A helical membrane pass occupies residues 117 to 137 (LYSSILFLTCFSLFRYIVIIH). At 138-151 (PMSCFSIQKTRWAV) the chain is on the cytoplasmic side. The helical transmembrane segment at 152–172 (VACAGVWVISLVAVMPMTFLI) threads the bilayer. Over 173–200 (TSTTRTNRSACLDLTSSDDLTTIKWYNL) the chain is Extracellular. A helical membrane pass occupies residues 201–221 (ILTATTFCLPLLIVTLCYTTI). The Cytoplasmic segment spans residues 222–242 (ISTLTHGPRTHSCFKQKARRL). The chain crosses the membrane as a helical span at residues 243–263 (TILLLLVFYVCFLPFHILRVI). The Extracellular portion of the chain corresponds to 264 to 284 (RIESRLLSISCSIESHIHEAY). The chain crosses the membrane as a helical span at residues 285–305 (IVSRPLAALNTFGNLLLYVVV). The Cytoplasmic segment spans residues 306–337 (SNNFQQAFCSAVRCKAIGDLEQAKKDSCSNNP).

The protein belongs to the G-protein coupled receptor 1 family. In terms of tissue distribution, highly expressed in mast cells and is found predominantly in the tissues of the respiratory tract and kidneys.

Its subcellular location is the cell membrane. Its function is as follows. G protein-coupled receptor for dicarboxylates and amino dicarboxylates. Receptor for itaconate, a metabolite produced by myeloid lineages. In the respiratory epithelium, couples the binding of itaconate to the activation of GNA11 and downstream intracellular Ca(2+) release, leading to mucocilliary clearance of airborne pathogens. Receptor for leukotriene E4 (LTE4) produced by mast cells upon allergic inflammation. Binds with high affinity to LTE4 and elicits mucin release from pulmonary epithelium in response to airborne fungi allergens. Regulates mucin-producing goblet cell homeostasis. Receptor for alpha-ketoglutarate produced by proximal tubule renal cells upon metabolic alkalosis. In an intrarenal paracrine signaling pathway, binds alpha-ketoglutarate and drives transepithelial salt reabsorption and bicarbonate secretion by SLC26A4/pendrin-positive intercalated cells. The polypeptide is 2-oxoglutarate receptor 1 (Oxgr1) (Rattus norvegicus (Rat)).